Consider the following 319-residue polypeptide: Protoheme IX farnesyltransferase (319 aa).

9 helical membrane-spanning segments follow: residues 34–54 (VMSL…GHIN), 55–75 (PVLG…SGAL), 95–115 (IPAG…LSGF), 119–139 (ILGL…IFFY), 155–175 (IVIG…CVTG), 182–202 (VVLF…LALF), 221–241 (VPTT…IGVV), 244–264 (FMGF…VIFV), and 291–311 (IFYL…AVLM).

It belongs to the UbiA prenyltransferase family. Protoheme IX farnesyltransferase subfamily.

The protein resides in the cell inner membrane. It carries out the reaction heme b + (2E,6E)-farnesyl diphosphate + H2O = Fe(II)-heme o + diphosphate. It functions in the pathway porphyrin-containing compound metabolism; heme O biosynthesis; heme O from protoheme: step 1/1. In terms of biological role, converts heme B (protoheme IX) to heme O by substitution of the vinyl group on carbon 2 of heme B porphyrin ring with a hydroxyethyl farnesyl side group. The sequence is that of Protoheme IX farnesyltransferase from Rhizobium rhizogenes (strain K84 / ATCC BAA-868) (Agrobacterium radiobacter).